A 528-amino-acid chain; its full sequence is Membrane protein insertase YidC (528 aa).

A run of 4 helical transmembrane segments spans residues Val-5–Pro-25, Tyr-346–His-366, Leu-416–Ile-436, and Met-486–Leu-506.

This sequence belongs to the OXA1/ALB3/YidC family. Type 1 subfamily. Interacts with the Sec translocase complex via SecD. Specifically interacts with transmembrane segments of nascent integral membrane proteins during membrane integration.

It is found in the cell inner membrane. Functionally, required for the insertion and/or proper folding and/or complex formation of integral membrane proteins into the membrane. Involved in integration of membrane proteins that insert both dependently and independently of the Sec translocase complex, as well as at least some lipoproteins. Aids folding of multispanning membrane proteins. This Geotalea uraniireducens (strain Rf4) (Geobacter uraniireducens) protein is Membrane protein insertase YidC.